Reading from the N-terminus, the 1062-residue chain is Exportin-T (1062 aa).

It belongs to the exportin family.

The protein localises to the nucleus. It localises to the cytoplasm. TRNA nucleus export receptor which facilitates tRNA translocation across the nuclear pore complex. Involved in pre-tRNA splicing, probably by affecting the interaction of pre-tRNA with splicing endonuclease. The sequence is that of Exportin-T (LOS1) from Vanderwaltozyma polyspora (strain ATCC 22028 / DSM 70294 / BCRC 21397 / CBS 2163 / NBRC 10782 / NRRL Y-8283 / UCD 57-17) (Kluyveromyces polysporus).